Consider the following 104-residue polypeptide: Ig lambda-3 chain C region (104 aa).

Residues 6 to 99 (PTLTMFPPSP…EGDTVEKSLS (94 aa)) enclose the Ig-like domain. Cys-27 and Cys-85 form a disulfide bridge.

This Mus musculus (Mouse) protein is Ig lambda-3 chain C region (Iglc3).